The primary structure comprises 518 residues: Ribonuclease Y (518 aa).

Residues 2-22 form a helical membrane-spanning segment; the sequence is GSIIISALLALVIGAVVGFFV. The 64-residue stretch at 208–271 folds into the KH domain; that stretch reads TVSVVNLPND…ETARIALDKL (64 aa). The region spanning 334 to 427 is the HD domain; sequence VLKHSVEVAF…VAAADALSAA (94 aa).

This sequence belongs to the RNase Y family.

The protein localises to the cell membrane. Endoribonuclease that initiates mRNA decay. This chain is Ribonuclease Y, found in Geobacillus thermodenitrificans (strain NG80-2).